A 488-amino-acid polypeptide reads, in one-letter code: TOX high mobility group box family member 2 (488 aa).

Residues 76 to 114 (YEIPPITPPNLPEPSLLHLGDHEASYHSLCHGLTPNGLL) form a required for transcriptional activation region. 3 disordered regions span residues 192-258 (RSSI…PQKP), 293-328 (WDSL…KQPM), and 363-473 (SLLP…ECGI). Residues 204–216 (GSKSATPSPSSST) are compositionally biased toward low complexity. Positions 222-239 (EVHFKISGEKRPSADPGK) are enriched in basic and acidic residues. Positions 223 to 252 (VHFKISGEKRPSADPGKKAKNPKKKKKKDP) match the Nuclear localization signal motif. The segment covering 240 to 250 (KAKNPKKKKKK) has biased composition (basic residues). Residues 255-323 (PQKPVSAYAL…QANPPAKMLP (69 aa)) constitute a DNA-binding region (HMG box). Positions 302 to 316 (QSSPDQGETKSTQAN) are enriched in polar residues. Over residues 443 to 460 (PSSSGSCSPGPSNPTSSG) the composition is skewed to low complexity.

The protein resides in the nucleus. In terms of biological role, putative transcriptional activator involved in the hypothalamo-pituitary-gonadal system. The protein is TOX high mobility group box family member 2 (TOX2) of Homo sapiens (Human).